A 574-amino-acid polypeptide reads, in one-letter code: Sulfate adenylyltransferase (574 aa).

The tract at residues Met-1–Tyr-169 is N-terminal. The catalytic stretch occupies residues Asp-170–Thr-394. Gln-197 contacts sulfate. ATP contacts are provided by residues Gln-197–Asn-200 and Gly-291–His-294. Active-site residues include Thr-198, Arg-199, and Asn-200. Arg-199 contributes to the sulfate binding site. Ala-295 contacts sulfate. Position 333 (Val-333) interacts with ATP. The tract at residues Gln-395–Leu-574 is allosteric regulation domain; adenylyl-sulfate kinase-like. 3'-phosphoadenylyl sulfate contacts are provided by residues Asp-434–Arg-437, Arg-451, Ile-477–Ala-478, and Arg-516.

In the N-terminal section; belongs to the sulfate adenylyltransferase family. This sequence in the C-terminal section; belongs to the APS kinase family. Homohexamer. Dimer of trimers.

Its subcellular location is the cytoplasm. The enzyme catalyses sulfate + ATP + H(+) = adenosine 5'-phosphosulfate + diphosphate. It functions in the pathway sulfur metabolism; hydrogen sulfide biosynthesis; sulfite from sulfate: step 1/3. Allosterically inhibited by 3'-phosphoadenosine 5'-phosphosulfate (PAPS). Catalyzes the first intracellular reaction of sulfate assimilation, forming adenosine-5'-phosphosulfate (APS) from inorganic sulfate and ATP. Plays an important role in sulfate activation as a component of the biosynthesis pathway of sulfur-containing amino acids. This chain is Sulfate adenylyltransferase, found in Aspergillus terreus (strain NIH 2624 / FGSC A1156).